The following is a 253-amino-acid chain: Methionine aminopeptidase (253 aa).

Histidine 78 is a substrate binding site. The a divalent metal cation site is built by aspartate 95, aspartate 106, and histidine 169. A substrate-binding site is contributed by histidine 176. A divalent metal cation-binding residues include glutamate 206 and glutamate 237.

The protein belongs to the peptidase M24A family. Methionine aminopeptidase type 1 subfamily. As to quaternary structure, monomer. It depends on Co(2+) as a cofactor. The cofactor is Zn(2+). Mn(2+) is required as a cofactor. Requires Fe(2+) as cofactor.

It catalyses the reaction Release of N-terminal amino acids, preferentially methionine, from peptides and arylamides.. Functionally, removes the N-terminal methionine from nascent proteins. The N-terminal methionine is often cleaved when the second residue in the primary sequence is small and uncharged (Met-Ala-, Cys, Gly, Pro, Ser, Thr, or Val). Requires deformylation of the N(alpha)-formylated initiator methionine before it can be hydrolyzed. The polypeptide is Methionine aminopeptidase (Helicobacter pylori (strain ATCC 700392 / 26695) (Campylobacter pylori)).